An 81-amino-acid chain; its full sequence is Acyl carrier protein (81 aa).

Residues 3-78 (QEIFEKVKSI…AAVDYIEKEQ (76 aa)) enclose the Carrier domain. An O-(pantetheine 4'-phosphoryl)serine modification is found at S38.

The protein belongs to the acyl carrier protein (ACP) family. In terms of processing, 4'-phosphopantetheine is transferred from CoA to a specific serine of apo-ACP by AcpS. This modification is essential for activity because fatty acids are bound in thioester linkage to the sulfhydryl of the prosthetic group.

The protein resides in the cytoplasm. The protein operates within lipid metabolism; fatty acid biosynthesis. Carrier of the growing fatty acid chain in fatty acid biosynthesis. The sequence is that of Acyl carrier protein from Crocosphaera subtropica (strain ATCC 51142 / BH68) (Cyanothece sp. (strain ATCC 51142)).